A 414-amino-acid chain; its full sequence is MANSC domain-containing protein 1 (414 aa).

Residues Met-1–Ala-24 form the signal peptide. Residues Gly-25–Leu-369 are Extracellular-facing. The MANSC domain occupies Ser-32 to Tyr-116. N-linked (GlcNAc...) asparagine glycans are attached at residues Asn-128, Asn-234, and Asn-335. The segment at Phe-311–Ser-339 is disordered. Positions Ser-326 to Ala-338 are enriched in polar residues. Residues Ile-370 to Val-392 form a helical membrane-spanning segment. Topologically, residues Glu-393 to Ile-414 are cytoplasmic.

It is found in the membrane. The sequence is that of MANSC domain-containing protein 1 (Mansc1) from Mus musculus (Mouse).